A 389-amino-acid chain; its full sequence is Formate-dependent phosphoribosylglycinamide formyltransferase (389 aa).

Residues 21–22 (EL) and glutamate 81 contribute to the N(1)-(5-phospho-beta-D-ribosyl)glycinamide site. ATP contacts are provided by residues arginine 113, lysine 154, 159 to 164 (SSGKGQ), 194 to 197 (EEFI), and glutamate 202. Residues 118–307 (RLAAEKLGLK…EFEIHVRAIL (190 aa)) enclose the ATP-grasp domain. Mg(2+)-binding residues include glutamate 266 and glutamate 278. N(1)-(5-phospho-beta-D-ribosyl)glycinamide is bound by residues aspartate 285, lysine 353, and 360–361 (RR).

This sequence belongs to the PurK/PurT family. As to quaternary structure, homodimer.

It catalyses the reaction N(1)-(5-phospho-beta-D-ribosyl)glycinamide + formate + ATP = N(2)-formyl-N(1)-(5-phospho-beta-D-ribosyl)glycinamide + ADP + phosphate + H(+). Its pathway is purine metabolism; IMP biosynthesis via de novo pathway; N(2)-formyl-N(1)-(5-phospho-D-ribosyl)glycinamide from N(1)-(5-phospho-D-ribosyl)glycinamide (formate route): step 1/1. In terms of biological role, involved in the de novo purine biosynthesis. Catalyzes the transfer of formate to 5-phospho-ribosyl-glycinamide (GAR), producing 5-phospho-ribosyl-N-formylglycinamide (FGAR). Formate is provided by PurU via hydrolysis of 10-formyl-tetrahydrofolate. The sequence is that of Formate-dependent phosphoribosylglycinamide formyltransferase from Methanocaldococcus jannaschii (strain ATCC 43067 / DSM 2661 / JAL-1 / JCM 10045 / NBRC 100440) (Methanococcus jannaschii).